We begin with the raw amino-acid sequence, 738 residues long: Glycogen [starch] synthase, muscle (738 aa).

A Phosphoserine; by AMPK and PKA modification is found at serine 8. Phosphoserine is present on serine 11. Lysine 39 is a UDP binding site. Positions 205 and 211 each coordinate UDP-alpha-D-glucose. Residues histidine 291, glutamate 292, glutamine 294, histidine 297, and lysine 301 each coordinate alpha-D-glucose 6-phosphate. Arginine 331 contributes to the UDP binding site. Arginine 331 lines the UDP-alpha-D-glucose pocket. Residue serine 412 is modified to Phosphoserine. Alpha-D-glucose 6-phosphate is bound at residue histidine 501. Glutamate 510, tryptophan 512, and glycine 513 together coordinate UDP-alpha-D-glucose. UDP is bound at residue threonine 515. Residues arginine 582 and arginine 586 each coordinate alpha-D-glucose 6-phosphate. The interval 632-738 (QGYRYPRPAS…PTSSLGEERN (107 aa)) is disordered. Serine 641 carries the phosphoserine; by DYRK2, GSK3-alpha, GSK3-beta and PASK modification. A phosphoserine mark is found at serine 645, serine 649, serine 652, serine 653, serine 657, and serine 672. Over residues 658 to 681 (EDEEEPRDGPLGEDSERYDEEEEA) the composition is skewed to acidic residues. The segment covering 682–695 (AKDRRNIRAPEWPR) has biased composition (basic and acidic residues). Residues serine 698, serine 709, and serine 711 each carry the phosphoserine modification. Residues 698-738 (SCSSSTGGSKRSNSVDTGPSSSLSTPTEPLSPTSSLGEERN) are compositionally biased toward low complexity. 2 positions are modified to phosphothreonine: threonine 722 and threonine 724. A phosphoserine mark is found at serine 728 and serine 732.

The protein belongs to the glycosyltransferase 3 family. In terms of assembly, part of the GYS1-GYG1 complex, a heterooctamer composed of a tetramer of GYS1 and 2 dimers of GYG1, where each GYS1 protomer binds to one GYG1 subunit (via GYG1 C-terminus); the GYS1 tetramer may dissociate from GYG1 dimers to continue glycogen polymerization on its own. Primed phosphorylation at Ser-657 (site 5) by CSNK2A1 and CSNK2A2 is required for inhibitory phosphorylation at Ser-641 (site 3a), Ser-645 (site 3b), Ser-649 (site 3c) and Ser-653 (site 4) by GSK3A an GSK3B. Phosphorylated at Ser-641 by PASK, leading to inactivation; phosphorylation by PASK is inhibited by glycogen. Phosphorylated at Ser-641 by DYRK2, leading to inactivation. Dephosphorylation at Ser-641 and Ser-645 by PP1 activates the enzyme. Phosphorylation at Ser-8 by AMPK inactivates the enzyme activity.

The enzyme catalyses [(1-&gt;4)-alpha-D-glucosyl](n) + UDP-alpha-D-glucose = [(1-&gt;4)-alpha-D-glucosyl](n+1) + UDP + H(+). The protein operates within glycan biosynthesis; glycogen biosynthesis. With respect to regulation, allosteric activation by glucose-6-phosphate. Phosphorylation reduces the activity towards UDP-glucose. When in the non-phosphorylated state, glycogen synthase does not require glucose-6-phosphate as an allosteric activator; when phosphorylated it does. Functionally, glycogen synthase participates in the glycogen biosynthetic process along with glycogenin and glycogen branching enzyme. Extends the primer composed of a few glucose units formed by glycogenin by adding new glucose units to it. In this context, glycogen synthase transfers the glycosyl residue from UDP-Glc to the non-reducing end of alpha-1,4-glucan. In Mus musculus (Mouse), this protein is Glycogen [starch] synthase, muscle (Gys1).